A 237-amino-acid chain; its full sequence is Ribosomal RNA small subunit methyltransferase G (237 aa).

S-adenosyl-L-methionine is bound by residues Gly78, Phe83, 129-130 (AE), and Arg148.

Belongs to the methyltransferase superfamily. RNA methyltransferase RsmG family.

The protein resides in the cytoplasm. In terms of biological role, specifically methylates the N7 position of a guanine in 16S rRNA. The polypeptide is Ribosomal RNA small subunit methyltransferase G (Streptococcus thermophilus (strain ATCC BAA-491 / LMD-9)).